The chain runs to 129 residues: Protein Turandot A (129 aa).

A signal peptide spans 1 to 21 (MNSLTGFMCCALLLISPLCMG). N-linked (GlcNAc...) asparagine glycosylation occurs at Asn-49.

This sequence belongs to the Turandot family.

The protein localises to the secreted. In terms of biological role, a humoral factor that plays a role in stress tolerance; gives increased resistance to the lethal effects of bacterial challenge and stress. Regulated by the JAK/STAT pathway and NF-KB-like Relish pathway in the fat body, upd3 in the hemocytes and Mekk1 in response to septic injury and consequent immune response. This chain is Protein Turandot A (TotA), found in Drosophila yakuba (Fruit fly).